A 151-amino-acid chain; its full sequence is D-aminoacyl-tRNA deacylase (151 aa).

The short motif at 137–138 is the Gly-cisPro motif, important for rejection of L-amino acids element; that stretch reads GP.

This sequence belongs to the DTD family. As to quaternary structure, homodimer.

It is found in the cytoplasm. The catalysed reaction is glycyl-tRNA(Ala) + H2O = tRNA(Ala) + glycine + H(+). It carries out the reaction a D-aminoacyl-tRNA + H2O = a tRNA + a D-alpha-amino acid + H(+). An aminoacyl-tRNA editing enzyme that deacylates mischarged D-aminoacyl-tRNAs. Also deacylates mischarged glycyl-tRNA(Ala), protecting cells against glycine mischarging by AlaRS. Acts via tRNA-based rather than protein-based catalysis; rejects L-amino acids rather than detecting D-amino acids in the active site. By recycling D-aminoacyl-tRNA to D-amino acids and free tRNA molecules, this enzyme counteracts the toxicity associated with the formation of D-aminoacyl-tRNA entities in vivo and helps enforce protein L-homochirality. This chain is D-aminoacyl-tRNA deacylase, found in Acaryochloris marina (strain MBIC 11017).